The following is a 317-amino-acid chain: Methionyl-tRNA formyltransferase (317 aa).

A (6S)-5,6,7,8-tetrahydrofolate-binding site is contributed by 111-114; it reads SLLP.

Belongs to the Fmt family.

It carries out the reaction L-methionyl-tRNA(fMet) + (6R)-10-formyltetrahydrofolate = N-formyl-L-methionyl-tRNA(fMet) + (6S)-5,6,7,8-tetrahydrofolate + H(+). Its function is as follows. Attaches a formyl group to the free amino group of methionyl-tRNA(fMet). The formyl group appears to play a dual role in the initiator identity of N-formylmethionyl-tRNA by promoting its recognition by IF2 and preventing the misappropriation of this tRNA by the elongation apparatus. The polypeptide is Methionyl-tRNA formyltransferase (Chlorobium phaeobacteroides (strain BS1)).